The chain runs to 311 residues: Porphobilinogen deaminase (311 aa).

At cysteine 242 the chain carries S-(dipyrrolylmethanemethyl)cysteine.

The protein belongs to the HMBS family. As to quaternary structure, monomer. Requires dipyrromethane as cofactor.

The catalysed reaction is 4 porphobilinogen + H2O = hydroxymethylbilane + 4 NH4(+). It participates in porphyrin-containing compound metabolism; protoporphyrin-IX biosynthesis; coproporphyrinogen-III from 5-aminolevulinate: step 2/4. Functionally, tetrapolymerization of the monopyrrole PBG into the hydroxymethylbilane pre-uroporphyrinogen in several discrete steps. The polypeptide is Porphobilinogen deaminase (Baumannia cicadellinicola subsp. Homalodisca coagulata).